A 489-amino-acid chain; its full sequence is 2-(3-amino-3-carboxypropyl)histidine synthase subunit 2 (489 aa).

Methionine 1 carries the post-translational modification N-acetylmethionine. Residue serine 7 is modified to Phosphoserine. Residues cysteine 89, cysteine 110, and cysteine 341 each coordinate [4Fe-4S] cluster. Serine 446 bears the Phosphoserine mark. Threonine 467 carries the phosphothreonine modification. Residue serine 488 is modified to Phosphoserine.

Belongs to the DPH1/DPH2 family. DPH2 subfamily. As to quaternary structure, component of the 2-(3-amino-3-carboxypropyl)histidine synthase complex composed of DPH1, DPH2, DPH3 and a NADH-dependent reductase. Interacts with DPH1. The cofactor is [4Fe-4S] cluster.

It functions in the pathway protein modification; peptidyl-diphthamide biosynthesis. Functionally, required for the first step of diphthamide biosynthesis, a post-translational modification of histidine which occurs in elongation factor 2. DPH1 and DPH2 transfer a 3-amino-3-carboxypropyl (ACP) group from S-adenosyl-L-methionine (SAM) to a histidine residue, the reaction is assisted by a reduction system comprising DPH3 and a NADH-dependent reductase. Facilitates the reduction of the catalytic iron-sulfur cluster found in the DPH1 subunit. This Mus musculus (Mouse) protein is 2-(3-amino-3-carboxypropyl)histidine synthase subunit 2 (Dph2).